We begin with the raw amino-acid sequence, 66 residues long: Surface composition regulator (66 aa).

Belongs to the GlgS family.

Major determinant of cell surface composition. Negatively regulates motility, adhesion and synthesis of biofilm exopolysaccharides. The sequence is that of Surface composition regulator from Escherichia coli O139:H28 (strain E24377A / ETEC).